The following is a 474-amino-acid chain: PRAME family member 10 (474 aa).

The stretch at 97-124 (RWKLQVLDLRDVDENFWTIWSGARVLSC) is one LRR 1; degenerate repeat. Residues 179 to 203 (HLCCSKVQNYSMPTSSFRNLLERIY) form an LRR 2; degenerate repeat. An LRR 3; degenerate repeat occupies 204 to 230 (PDSIQELEVWKKCSLNKTGKFAPYLSQ). Residues 231–265 (MSNLRELFLAFGYERELYVSVQWPCIPDLDSPFLC) form an LRR 4; degenerate repeat. LRR repeat units follow at residues 266-291 (LYYP…LRYL), 292-323 (KNPL…SQLK), 324-342 (ELRL…PLGV), 348-375 (AATL…ALSH), and 376-400 (CSQL…LLRH).

This sequence belongs to the PRAME family.

In Homo sapiens (Human), this protein is PRAME family member 10.